We begin with the raw amino-acid sequence, 400 residues long: Chorismate synthase (400 aa).

Arginine 40 and arginine 46 together coordinate NADP(+). FMN contacts are provided by residues 135–137 (RAS), 257–258 (QA), glycine 301, 316–320 (KPIST), and arginine 342.

This sequence belongs to the chorismate synthase family. Homotetramer. The cofactor is FMNH2.

The enzyme catalyses 5-O-(1-carboxyvinyl)-3-phosphoshikimate = chorismate + phosphate. Its pathway is metabolic intermediate biosynthesis; chorismate biosynthesis; chorismate from D-erythrose 4-phosphate and phosphoenolpyruvate: step 7/7. Functionally, catalyzes the anti-1,4-elimination of the C-3 phosphate and the C-6 proR hydrogen from 5-enolpyruvylshikimate-3-phosphate (EPSP) to yield chorismate, which is the branch point compound that serves as the starting substrate for the three terminal pathways of aromatic amino acid biosynthesis. This reaction introduces a second double bond into the aromatic ring system. The sequence is that of Chorismate synthase from Tropheryma whipplei (strain TW08/27) (Whipple's bacillus).